The chain runs to 295 residues: Trimeric intracellular cation channel type 1B.1 (295 aa).

Residues Met-1–Tyr-27 lie on the Lumenal side of the membrane. Residues Pro-28–Asp-45 traverse the membrane as a helical segment. At Leu-46 to Lys-56 the chain is on the cytoplasmic side. The discontinuously helical transmembrane segment at His-57–Leu-80 threads the bilayer. At Gly-81 to Lys-89 the chain is on the lumenal side. A helical membrane pass occupies residues Arg-90 to Ala-107. Topologically, residues Pro-108–Thr-119 are cytoplasmic. Residues Pro-120–Tyr-148 traverse the membrane as a helical segment. 2 residues coordinate a 1,2-diacyl-sn-glycero-3-phospho-(1D-myo-inositol-4,5-bisphosphate): Lys-129 and Arg-133. Residues Pro-149–Asn-150 lie on the Lumenal side of the membrane. The chain crosses the membrane as a discontinuously helical span at residues Ser-151–Arg-177. Ser-166 contributes to the a 1,2-diacyl-sn-glycero-3-phospho-(1D-myo-inositol-4,5-bisphosphate) binding site. The Cytoplasmic segment spans residues Gly-178–Leu-188. A helical membrane pass occupies residues Arg-189–Gly-210. The Lumenal segment spans residues Thr-211–Ala-215. A helical transmembrane segment spans residues Pro-216–His-239. Topologically, residues Val-240–Gln-295 are cytoplasmic. The interval Arg-274–Gln-295 is disordered.

It belongs to the TMEM38 family. In terms of assembly, homotrimer; trimerization probably requires binding to phosphatidylinositol 4,5-bisphosphate (PIP2).

The protein resides in the endoplasmic reticulum membrane. Potassium channel that mediates transmembrane potassium transport. Might be required for maintenance of rapid intracellular calcium release. May act as a counter-ion channel that functions in synchronization with calcium release from intracellular stores. Binds phosphatidylinositol 4,5-bisphosphate (PIP2). This Caenorhabditis elegans protein is Trimeric intracellular cation channel type 1B.1.